We begin with the raw amino-acid sequence, 107 residues long: Nucleoid-associated protein RP866 (107 aa).

Belongs to the YbaB/EbfC family. Homodimer.

Its subcellular location is the cytoplasm. The protein resides in the nucleoid. Its function is as follows. Binds to DNA and alters its conformation. May be involved in regulation of gene expression, nucleoid organization and DNA protection. The protein is Nucleoid-associated protein RP866 of Rickettsia prowazekii (strain Madrid E).